The following is a 204-amino-acid chain: MIFKDVGVIGYAEALRIQEQLVAEVQQGGEEALLLLEHLPVYTIGAGGDRGNVLDPELEPVRVNRGGDVTYHGPGQLVCYPILDLSRRGRDLHRYLRFLERFLVELCAGLGVGCHTVPGRTGVWTGNGKLASIGVGVRRWVSMHGFALNVSPDTAPFSRINPCGMPGCSITSLSLELGEELFVDELKEMVAIRFQPLLNLHLPR.

One can recognise a BPL/LPL catalytic domain in the interval 27 to 202 (QGGEEALLLL…RFQPLLNLHL (176 aa)). Residues 65–72 (RGGDVTYH), 132–134 (SIG), and 145–147 (GFA) contribute to the substrate site. Cys163 (acyl-thioester intermediate) is an active-site residue.

It belongs to the LipB family.

It is found in the cytoplasm. The enzyme catalyses octanoyl-[ACP] + L-lysyl-[protein] = N(6)-octanoyl-L-lysyl-[protein] + holo-[ACP] + H(+). It participates in protein modification; protein lipoylation via endogenous pathway; protein N(6)-(lipoyl)lysine from octanoyl-[acyl-carrier-protein]: step 1/2. Its function is as follows. Catalyzes the transfer of endogenously produced octanoic acid from octanoyl-acyl-carrier-protein onto the lipoyl domains of lipoate-dependent enzymes. Lipoyl-ACP can also act as a substrate although octanoyl-ACP is likely to be the physiological substrate. The polypeptide is Octanoyltransferase (Citrifermentans bemidjiense (strain ATCC BAA-1014 / DSM 16622 / JCM 12645 / Bem) (Geobacter bemidjiensis)).